The following is a 113-amino-acid chain: UPF0122 protein SSU98_0878 (113 aa).

It belongs to the UPF0122 family.

Its function is as follows. Might take part in the signal recognition particle (SRP) pathway. This is inferred from the conservation of its genetic proximity to ftsY/ffh. May be a regulatory protein. This chain is UPF0122 protein SSU98_0878, found in Streptococcus suis (strain 98HAH33).